The chain runs to 234 residues: Small ribosomal subunit protein uS3 (234 aa).

One can recognise a KH type-2 domain in the interval 39–107 (IRKMLKERLK…EVHLNLVEVR (69 aa)). A compositionally biased stretch (basic and acidic residues) spans 215–227 (QERRLQESGEQRA). Residues 215–234 (QERRLQESGEQRARSGRQAA) are disordered.

Belongs to the universal ribosomal protein uS3 family. Part of the 30S ribosomal subunit. Forms a tight complex with proteins S10 and S14.

Functionally, binds the lower part of the 30S subunit head. Binds mRNA in the 70S ribosome, positioning it for translation. The chain is Small ribosomal subunit protein uS3 from Maricaulis maris (strain MCS10) (Caulobacter maris).